The sequence spans 106 residues: UPF0060 membrane protein Rleg2_1018 (106 aa).

Transmembrane regions (helical) follow at residues 4–24 (IIYA…WAWL), 30–50 (VWWL…LTLV), 58–78 (TFAA…WLVE), and 86–106 (DIGG…GPRG).

This sequence belongs to the UPF0060 family.

The protein localises to the cell inner membrane. This Rhizobium leguminosarum bv. trifolii (strain WSM2304) protein is UPF0060 membrane protein Rleg2_1018.